The primary structure comprises 146 residues: 3-dehydroquinate dehydratase (146 aa).

The active-site Proton acceptor is the Tyr22. Asn73, His79, and Asp86 together coordinate substrate. The active-site Proton donor is the His99. Substrate contacts are provided by residues 100–101 (IS) and Arg110.

Belongs to the type-II 3-dehydroquinase family. As to quaternary structure, homododecamer.

The catalysed reaction is 3-dehydroquinate = 3-dehydroshikimate + H2O. The protein operates within metabolic intermediate biosynthesis; chorismate biosynthesis; chorismate from D-erythrose 4-phosphate and phosphoenolpyruvate: step 3/7. Functionally, catalyzes a trans-dehydration via an enolate intermediate. The sequence is that of 3-dehydroquinate dehydratase from Prochlorococcus marinus (strain MIT 9515).